A 1003-amino-acid polypeptide reads, in one-letter code: Putative helicase MOV-10 (1003 aa).

At lysine 148 the chain carries N6-acetyllysine. Threonine 160 and threonine 254 each carry phosphothreonine. Serine 432 carries the post-translational modification Phosphoserine. Residue 524 to 531 (GPPGTGKT) participates in ATP binding. The DEAG box signature appears at 645-648 (DEAG). An interaction with AGO2 and APOBEC3G region spans residues 921–965 (NPLLLGHDPDWKVFLEFCKENGGYTGCPFPAKLDLQQGQNLLQGL). A disordered region spans residues 968-1003 (LSPSTSGLKSHDYLPQEREGEEGLSLQVEPEWRNEL). Phosphoserine occurs at positions 969 and 977. Residues 976-985 (KSHDYLPQER) are compositionally biased toward basic and acidic residues.

Belongs to the DNA2/NAM7 helicase family. SDE3 subfamily. In terms of assembly, interacts with DICER1, AGO2, TARBP2, EIF6 and RPL7A (60S ribosome subunit); they form a large RNA-induced silencing complex (RISC). Interacts with APOBEC3G in an RNA-dependent manner. Interacts with TRIM71 (via NHL repeats) in an RNA-dependent manner. Interacts with both protein products of LIRE1, ORF1p and ORF2p. Interacts with TUT4 and, to a lesser extent, TUT7; the interactions are RNA-dependent. Interacts with AGO2, TNRC6B and UPF1; the interactions are direct and RNA-dependent. Interacts with FMR1; this interaction is direct, occurs in an RNA-dependent manner on polysomes and induces association of MOV10 with RNAs. Interacts with SHFL; the interaction increases in presence of RNA. Interacts with DHX34; the interaction is-RNA independent. Interacts with RBM46. In terms of processing, ubiquitinated by the DCX(DCAF12) complex that specifically recognizes the glutamate-leucine (Glu-Leu) degron at the C-terminus, leading to its degradation.

The protein resides in the cytoplasm. It is found in the P-body. It localises to the cytoplasmic ribonucleoprotein granule. The protein localises to the stress granule. Its subcellular location is the nucleus. The catalysed reaction is ATP + H2O = ADP + phosphate + H(+). 5' to 3' RNA helicase that is involved in a number of cellular roles ranging from mRNA metabolism and translation, modulation of viral infectivity, inhibition of retrotransposition, or regulation of synaptic transmission. Plays an important role in innate antiviral immunity by promoting type I interferon production. Mechanistically, specifically uses IKKepsilon/IKBKE as the mediator kinase for IRF3 activation. Contributes to UPF1 mRNA target degradation by translocation along 3' UTRs. Required for microRNA (miRNA)-mediated gene silencing by the RNA-induced silencing complex (RISC). Required for both miRNA-mediated translational repression and miRNA-mediated cleavage of complementary mRNAs by RISC. In cooperation with FMR1, regulates miRNA-mediated translational repression by AGO2. Restricts retrotransposition of long interspersed element-1 (LINE-1) in cooperation with TUT4 and TUT7 counteracting the RNA chaperonne activity of L1RE1. Facilitates LINE-1 uridylation by TUT4 and TUT7. Required for embryonic viability and for normal central nervous system development and function. Plays two critical roles in early brain development: suppresses retroelements in the nucleus by directly inhibiting cDNA synthesis, while regulates cytoskeletal mRNAs to influence neurite outgrowth in the cytosol. May function as a messenger ribonucleoprotein (mRNP) clearance factor. This Bos taurus (Bovine) protein is Putative helicase MOV-10 (MOV10).